A 477-amino-acid chain; its full sequence is Monocarboxylate transporter 12-B (477 aa).

The Cytoplasmic segment spans residues 1–9 (MAQEKKKGG). The next 12 helical transmembrane spans lie at 10-30 (VLPP…VVTV), 58-78 (AWIH…GSLI), 86-106 (IAVI…SFAT), 116-136 (GLLT…MVGI), 148-168 (IAMS…QLLI), 178-198 (LILG…RPII), 253-273 (FLVL…PFVY), 289-309 (AFLM…FGWL), 320-340 (NICY…IPLL), 344-364 (VWLV…VALI), 383-403 (VVYF…GWLV), and 413-433 (FFLS…VAII). Residues 434–477 (RYCQRNQKKNSLSKIPKLVSCEGKQVDYYPPKNKDLMLIIPATS) are Cytoplasmic-facing.

Belongs to the major facilitator superfamily. Monocarboxylate porter (TC 2.A.1.13) family.

It localises to the cell membrane. It is found in the basolateral cell membrane. It carries out the reaction creatine(in) = creatine(out). The enzyme catalyses guanidinoacetate(in) = guanidinoacetate(out). In terms of biological role, functions as a transporter for creatine and as well for its precursor guanidinoacetate. Transport of creatine and GAA is independent of resting membrane potential and extracellular Na(+), Cl(-), or pH. Contributes to the process of creatine biosynthesis and distribution. This is Monocarboxylate transporter 12-B (slc16a12b) from Danio rerio (Zebrafish).